The following is a 211-amino-acid chain: Proteasome subunit beta (211 aa).

Residues 1 to 8 constitute a propeptide, removed in mature form; by autocatalysis; it reads MNQTLETG. Residue T9 is the Nucleophile of the active site.

This sequence belongs to the peptidase T1B family. As to quaternary structure, the 20S proteasome core is composed of 14 alpha and 14 beta subunits that assemble into four stacked heptameric rings, resulting in a barrel-shaped structure. The two inner rings, each composed of seven catalytic beta subunits, are sandwiched by two outer rings, each composed of seven alpha subunits. The catalytic chamber with the active sites is on the inside of the barrel. Has a gated structure, the ends of the cylinder being occluded by the N-termini of the alpha-subunits. Is capped at one or both ends by the proteasome regulatory ATPase, PAN.

It is found in the cytoplasm. It catalyses the reaction Cleavage of peptide bonds with very broad specificity.. With respect to regulation, the formation of the proteasomal ATPase PAN-20S proteasome complex, via the docking of the C-termini of PAN into the intersubunit pockets in the alpha-rings, triggers opening of the gate for substrate entry. Interconversion between the open-gate and close-gate conformations leads to a dynamic regulation of the 20S proteasome proteolysis activity. Its function is as follows. Component of the proteasome core, a large protease complex with broad specificity involved in protein degradation. The T.acidophilum proteasome is able to cleave oligopeptides after Tyr, Leu, Phe, and to a lesser extent after Glu and Arg. Thus, displays chymotrypsin-like activity and low level of caspase-like and trypsin-like activities. This Thermoplasma acidophilum (strain ATCC 25905 / DSM 1728 / JCM 9062 / NBRC 15155 / AMRC-C165) protein is Proteasome subunit beta.